The sequence spans 83 residues: Ardiscretin (83 aa).

The N-terminal stretch at 1 to 20 (MKGMIMLISCLMLIDVVVES) is a signal peptide. The LCN-type CS-alpha/beta domain occupies 21 to 82 (KNGYIIEPKG…IFDYYNNKCG (62 aa)). Cystine bridges form between Cys31–Cys81, Cys35–Cys57, Cys43–Cys62, and Cys47–Cys64. Position 81 is a cysteine amide (Cys81).

In terms of tissue distribution, expressed by the venom gland.

It localises to the secreted. Functionally, inhibits the sodium (Nav) currents in an apparent irreversible manner. Produces small depolarization and induces repetitive firing in squid axons. Is specific for arthropods (crickets, triatomides, crabs and squids), but is non-toxic to mice. Shows antibacterial activity against both Gram-positive and Gram-negative bacteria. The chain is Ardiscretin from Tityus discrepans (Venezuelan scorpion).